The chain runs to 445 residues: Phosphoglucosamine mutase (445 aa).

Ser-102 serves as the catalytic Phosphoserine intermediate. 4 residues coordinate Mg(2+): Ser-102, Asp-241, Asp-243, and Asp-245. Ser-102 is subject to Phosphoserine.

The protein belongs to the phosphohexose mutase family. Requires Mg(2+) as cofactor. Activated by phosphorylation.

The enzyme catalyses alpha-D-glucosamine 1-phosphate = D-glucosamine 6-phosphate. In terms of biological role, catalyzes the conversion of glucosamine-6-phosphate to glucosamine-1-phosphate. The chain is Phosphoglucosamine mutase from Rhodococcus jostii (strain RHA1).